Consider the following 159-residue polypeptide: Phosphopantetheine adenylyltransferase (159 aa).

T10 serves as a coordination point for substrate. ATP-binding positions include 10–11 (TF) and H18. The substrate site is built by K42, M74, and R88. Residues 89–91 (GLR), E99, and 124–130 (WSFISSS) each bind ATP.

It belongs to the bacterial CoaD family. In terms of assembly, homohexamer. Mg(2+) is required as a cofactor.

The protein resides in the cytoplasm. The catalysed reaction is (R)-4'-phosphopantetheine + ATP + H(+) = 3'-dephospho-CoA + diphosphate. It functions in the pathway cofactor biosynthesis; coenzyme A biosynthesis; CoA from (R)-pantothenate: step 4/5. Its function is as follows. Reversibly transfers an adenylyl group from ATP to 4'-phosphopantetheine, yielding dephospho-CoA (dPCoA) and pyrophosphate. The chain is Phosphopantetheine adenylyltransferase from Shigella sonnei (strain Ss046).